A 20-amino-acid polypeptide reads, in one-letter code: U1-poneritoxin-Ni1a (20 aa).

Lys-20 is subject to Lysine amide.

The protein belongs to the non-disulfide-bridged peptide (NDBP) superfamily. Medium-length antimicrobial peptide (group 3) family. Ponericin-W subfamily. In terms of tissue distribution, expressed by the venom gland.

It is found in the secreted. The protein resides in the target cell membrane. Functionally, has activity against Gram-positive bacteria. Has insecticidal and hemolytic activities. May act by disrupting the integrity of the bacterial cell membrane. The protein is U1-poneritoxin-Ni1a of Neoponera inversa (Ant).